A 110-amino-acid polypeptide reads, in one-letter code: Protein YcgL (110 aa).

The 85-residue stretch at 14–98 folds into the YcgL domain; sequence MFCVIYRSSK…PPEDLLKQHL (85 aa).

This chain is Protein YcgL, found in Salmonella arizonae (strain ATCC BAA-731 / CDC346-86 / RSK2980).